A 438-amino-acid chain; its full sequence is Polycomb protein eed-A (438 aa).

The interval 1 to 67 (MSEASGRAAG…NAPGRKAWGK (67 aa)) is disordered. Over residues 40 to 57 (SIESGTNTERPDTPTNAA) the composition is skewed to polar residues. WD repeat units lie at residues 88-131 (DHNQ…DIRL), 139-182 (DADE…CIKH), 185-225 (GHGN…LVAI), 231-270 (GHRD…MKTA), 301-338 (IHRN…DDID), 356-396 (SQCD…PHKA), and 405-438 (KCAS…DRLR).

This sequence belongs to the WD repeat ESC family. Component of the prc2/eed-ezh2 complex. Interacts with yy1. Can interact with ezh2, hdac1 and taf9.

The protein resides in the nucleus. Polycomb group (PcG) protein. Component of the prc2/eed-ezh2 complex, which methylates 'Lys-9' and 'Lys-27' of histone H3, leading to transcriptional repression of the affected target gene. The protein is Polycomb protein eed-A (eed-a) of Xenopus laevis (African clawed frog).